The following is a 597-amino-acid chain: Protein disulfide isomerase-like 1-4 (597 aa).

The N-terminal stretch at 1–25 (MAFRVLLLFSLTALLIFSAVSPSFA) is a signal peptide. Acidic residues-rich tracts occupy residues 37–49 (LSFLEDLKEDDVP) and 61–84 (DEFEGGEEEDPDMYNDDDDEEGDF). The disordered stretch occupies residues 37–101 (LSFLEDLKED…SDPLPTPEID (65 aa)). A Thioredoxin 1 domain is found at 85–208 (SDLGNPDSDP…IVTWVKKKIG (124 aa)). N-linked (GlcNAc...) asparagine glycosylation is present at N112. Residues C132 and C135 each act as nucleophile in the active site. A disulfide bridge connects residues C132 and C135. Residues N213 and N342 are each glycosylated (N-linked (GlcNAc...) asparagine). A Thioredoxin 2 domain is found at 429–550 (FYKSDPIPEK…FYKFLRKHAT (122 aa)). Active-site nucleophile residues include C471 and C474. Cysteines 471 and 474 form a disulfide. A glycan (N-linked (GlcNAc...) asparagine) is linked at N524. The segment at 555–597 (LEKPASTESPKTAESTPKVETTETKESPDSTTKSSQSDSKDEL) is disordered. The span at 560–573 (STESPKTAESTPKV) shows a compositional bias: polar residues. A Prevents secretion from ER motif is present at residues 594-597 (KDEL).

The protein belongs to the protein disulfide isomerase family. Interacts with MEE8 and MED37A. As to expression, expressed in germinating seedling, including the cotyledons and hypocotyl, in vascular tissues, in pollen grains, root tips, leaf trichomes, developing seeds and siliques.

It is found in the endoplasmic reticulum lumen. The protein resides in the golgi apparatus. The protein localises to the vacuole. Its subcellular location is the nucleus. It localises to the secreted. It is found in the cell wall. It carries out the reaction Catalyzes the rearrangement of -S-S- bonds in proteins.. In terms of biological role, acts as a protein-folding catalyst that interacts with nascent polypeptides to catalyze the formation, isomerization, and reduction or oxidation of disulfide bonds. This Arabidopsis thaliana (Mouse-ear cress) protein is Protein disulfide isomerase-like 1-4 (PDIL1-4).